Consider the following 355-residue polypeptide: Isocitrate dehydrogenase [NAD] subunit gamma, mitochondrial (355 aa).

Position 1 (Ile-1) is a transit peptide, mitochondrion. Citrate is bound by residues Thr-82 and Asn-95. Positions 98, 129, and 216 each coordinate substrate. Asp-216 provides a ligand contact to Mn(2+). ADP contacts are provided by Asn-274, Thr-275, and Asn-286.

Belongs to the isocitrate and isopropylmalate dehydrogenases family. As to quaternary structure, heterooligomer of subunits alpha (IDH3A), beta (IDH3B), and gamma (IDH3G) in the apparent ratio of 2:1:1. The heterodimer containing one IDH3A and one IDH3B subunit and the heterodimer containing one IDH3A and one IDH3G subunit assemble into a heterotetramer (which contains two subunits of IDH3A, one of IDH3B and one of IDH3G) and further into the heterooctamer. Mg(2+) is required as a cofactor. The cofactor is Mn(2+).

It localises to the mitochondrion. The heterotetramer and the heterodimer composed of IDH3A and IDH3G subunits can be allosterically activated by citrate (CIT) or/and ADP, and the two activators can act independently or synergistically. The heterodimer composed of IDH3A and IDH3B subunits cannot be allosterically regulated and the allosteric regulation of the heterotetramer is through the IDH3G subunit and not the IDH3B subunit. The IDH3G subunit contains the allosteric site which consists of a CIT-binding site and an ADP-binding site, and the binding of CIT and ADP causes conformational changes at the allosteric site which are transmitted to the active site in the catalytic subunit (IDH3A) through a cascade of conformational changes at the heterodimer interface, leading to stabilization of the isocitrate-binding at the active site and thus activation of the enzyme. ATP can activate the heterotetramer and the heterodimer composed of IDH3A and IDH3G subunits at low concentrations but inhibits their activities at high concentrations, whereas ATP exhibits only inhibitory effect on the heterodimer composed of IDH3A and IDH3B subunits. In terms of biological role, regulatory subunit which plays a role in the allosteric regulation of the enzyme catalyzing the decarboxylation of isocitrate (ICT) into alpha-ketoglutarate. The heterodimer composed of the alpha (IDH3A) and beta (IDH3B) subunits and the heterodimer composed of the alpha (IDH3A) and gamma (IDH3G) subunits, have considerable basal activity but the full activity of the heterotetramer (containing two subunits of IDH3A, one of IDH3B and one of IDH3G) requires the assembly and cooperative function of both heterodimers. This chain is Isocitrate dehydrogenase [NAD] subunit gamma, mitochondrial (IDH3G), found in Macaca fascicularis (Crab-eating macaque).